The primary structure comprises 140 residues: Putative esterase SSO2140 (140 aa).

It belongs to the thioesterase PaaI family.

This is Putative esterase SSO2140 from Saccharolobus solfataricus (strain ATCC 35092 / DSM 1617 / JCM 11322 / P2) (Sulfolobus solfataricus).